The chain runs to 37 residues: Large ribosomal subunit protein bL36 (37 aa).

The protein belongs to the bacterial ribosomal protein bL36 family.

This is Large ribosomal subunit protein bL36 from Ureaplasma urealyticum serovar 10 (strain ATCC 33699 / Western).